The primary structure comprises 203 residues: Ribonuclease HII (203 aa).

An RNase H type-2 domain is found at 14–203 (GVIAGVDEVG…ILNSTKRALL (190 aa)). Residues Asp20, Glu21, and Asp112 each coordinate a divalent metal cation.

Belongs to the RNase HII family. Mn(2+) is required as a cofactor. Requires Mg(2+) as cofactor.

The protein resides in the cytoplasm. The catalysed reaction is Endonucleolytic cleavage to 5'-phosphomonoester.. Its function is as follows. Endonuclease that specifically degrades the RNA of RNA-DNA hybrids. This chain is Ribonuclease HII, found in Wolbachia sp. subsp. Brugia malayi (strain TRS).